The primary structure comprises 280 residues: Phosphonates import ATP-binding protein PhnC (280 aa).

Residues I4 to Q239 form the ABC transporter domain. G36 to S43 contacts ATP. Residues G246–S280 form a disordered region.

Belongs to the ABC transporter superfamily. Phosphonates importer (TC 3.A.1.9.1) family. In terms of assembly, the complex is composed of two ATP-binding proteins (PhnC), two transmembrane proteins (PhnE) and a solute-binding protein (PhnD).

It is found in the cell membrane. The enzyme catalyses phosphonate(out) + ATP + H2O = phosphonate(in) + ADP + phosphate + H(+). Part of the ABC transporter complex PhnCDE involved in phosphonates import. Responsible for energy coupling to the transport system. The sequence is that of Phosphonates import ATP-binding protein PhnC from Halobacterium salinarum (strain ATCC 700922 / JCM 11081 / NRC-1) (Halobacterium halobium).